The chain runs to 117 residues: MNKFIYETMYILRPDMTEEKVEQAITKYKSMLEEQGAYDIKIQHRGKLRLAYEINNQREGIYIQMNYQGPPTQIAILERAMRLSEEVIRYLTVKQELPKTPETDTQKNLEPAVALAE.

Belongs to the bacterial ribosomal protein bS6 family.

In terms of biological role, binds together with bS18 to 16S ribosomal RNA. The polypeptide is Small ribosomal subunit protein bS6 (Trichodesmium erythraeum (strain IMS101)).